The sequence spans 482 residues: Proline--tRNA ligase (482 aa).

This sequence belongs to the class-II aminoacyl-tRNA synthetase family. ProS type 3 subfamily. As to quaternary structure, homodimer.

It is found in the cytoplasm. It catalyses the reaction tRNA(Pro) + L-proline + ATP = L-prolyl-tRNA(Pro) + AMP + diphosphate. Functionally, catalyzes the attachment of proline to tRNA(Pro) in a two-step reaction: proline is first activated by ATP to form Pro-AMP and then transferred to the acceptor end of tRNA(Pro). In Mycoplasmopsis synoviae (strain 53) (Mycoplasma synoviae), this protein is Proline--tRNA ligase.